The following is a 179-amino-acid chain: Large ribosomal subunit protein uL5 (179 aa).

This sequence belongs to the universal ribosomal protein uL5 family. In terms of assembly, part of the 50S ribosomal subunit; part of the 5S rRNA/L5/L18/L25 subcomplex. Contacts the 5S rRNA and the P site tRNA. Forms a bridge to the 30S subunit in the 70S ribosome.

Its function is as follows. This is one of the proteins that bind and probably mediate the attachment of the 5S RNA into the large ribosomal subunit, where it forms part of the central protuberance. In the 70S ribosome it contacts protein S13 of the 30S subunit (bridge B1b), connecting the 2 subunits; this bridge is implicated in subunit movement. Contacts the P site tRNA; the 5S rRNA and some of its associated proteins might help stabilize positioning of ribosome-bound tRNAs. The chain is Large ribosomal subunit protein uL5 from Histophilus somni (strain 129Pt) (Haemophilus somnus).